Consider the following 490-residue polypeptide: Dual specificity protein kinase CLK3 (490 aa).

Positions methionine 1–aspartate 138 are disordered. Phosphotyrosine is present on tyrosine 7. 6 positions are modified to phosphoserine: serine 9, serine 49, serine 51, serine 67, serine 76, and serine 78. Composition is skewed to basic and acidic residues over residues tyrosine 26 to proline 56 and glutamate 63 to serine 76. A compositionally biased stretch (basic residues) spans arginine 88–arginine 116. Over residues serine 117–lysine 130 the composition is skewed to low complexity. A Phosphoserine modification is found at serine 135. In terms of domain architecture, Protein kinase spans tyrosine 156 to phenylalanine 472. ATP-binding positions include leucine 162–valine 170 and lysine 186. Aspartate 283 (proton acceptor) is an active-site residue.

It belongs to the protein kinase superfamily. CMGC Ser/Thr protein kinase family. Lammer subfamily. Post-translationally, autophosphorylates on all three types of residues. As to expression, endothelial cells.

The protein resides in the nucleus. It is found in the cytoplasm. The protein localises to the cytoplasmic vesicle. It localises to the secretory vesicle. Its subcellular location is the acrosome. The protein resides in the nucleus speckle. The catalysed reaction is L-seryl-[protein] + ATP = O-phospho-L-seryl-[protein] + ADP + H(+). It carries out the reaction L-threonyl-[protein] + ATP = O-phospho-L-threonyl-[protein] + ADP + H(+). It catalyses the reaction L-tyrosyl-[protein] + ATP = O-phospho-L-tyrosyl-[protein] + ADP + H(+). With respect to regulation, leucettine L41 inhibits its kinase activity and affects the regulation of alternative splicing mediated by phosphorylation of SR proteins. Functionally, dual specificity kinase acting on both serine/threonine and tyrosine-containing substrates. Phosphorylates serine- and arginine-rich (SR) proteins of the spliceosomal complex. May be a constituent of a network of regulatory mechanisms that enable SR proteins to control RNA splicing and can cause redistribution of SR proteins from speckles to a diffuse nucleoplasmic distribution. Phosphorylates SRSF1 and SRSF3. Regulates the alternative splicing of tissue factor (F3) pre-mRNA in endothelial cells. The chain is Dual specificity protein kinase CLK3 from Homo sapiens (Human).